Consider the following 310-residue polypeptide: Vomeronasal type-1 receptor 97 (310 aa).

Over 1–19 the chain is Extracellular; it reads MNKDNILHTDTNIKITLFS. The chain crosses the membrane as a helical span at residues 20–40; sequence EVSIGISANSALFFSHLFMLF. Residues 41 to 49 lie on the Cytoplasmic side of the membrane; the sequence is EKNRSKPID. Residues 50–70 traverse the membrane as a helical segment; the sequence is LYIAFLSLTQLMLLITIGLIA. The Extracellular portion of the chain corresponds to 71–93; it reads ADMFMSRGRWDSTTCQSLIYLHR. A disulfide bond links Cys-85 and Cys-172. A helical transmembrane segment spans residues 94–114; that stretch reads LLRGFTLCATCLLNVLWTITL. The Cytoplasmic segment spans residues 115–131; the sequence is SPRSSCLTTFKHKSPHH. A helical transmembrane segment spans residues 132-152; sequence ISGAFLFFCVLYISFGSHLFL. At 153–190 the chain is on the extracellular side; it reads STIATPNLTSDNFMYVTQSCSFLPMSYSRTSMFSTPMA. N-linked (GlcNAc...) asparagine glycosylation is present at Asn-159. A helical membrane pass occupies residues 191–211; sequence IREALLIGLIGLSSGYMVAFL. Over 212–238 the chain is Cytoplasmic; sequence WRHKNQARHLHSTSLSSKVSPEQRATR. The helical transmembrane segment at 239–259 threads the bilayer; the sequence is TIMILMSFFVVLYILENVVFY. Residues 260-269 are Extracellular-facing; the sequence is SRMTFKDGSM. A helical membrane pass occupies residues 270–290; that stretch reads FYCVQIIVSHSYATISPFVFI. Topologically, residues 291-310 are cytoplasmic; sequence CTEKRIIKLWGSMSSRIVSI.

The protein belongs to the G-protein coupled receptor 1 family. Expressed in 1-4% of neurons of the vomeronasal organ. Only one pheromone receptor gene may be expressed in a particular neuron. Not expressed in the main olfactory epithelium.

Its subcellular location is the cell membrane. Functionally, putative pheromone receptor implicated in the regulation of social as well as reproductive behavior. This chain is Vomeronasal type-1 receptor 97 (Vom1r97), found in Rattus norvegicus (Rat).